Consider the following 548-residue polypeptide: Stretch-activated cation channel MID1 (548 aa).

The signal sequence occupies residues 1–20 (MIVWQALFVVYCLFTTSIHG). The Extracellular portion of the chain corresponds to 21 to 341 (LFQDFNPFAN…YLTKKISNGD (321 aa)). N32, N70, N112, N125, N159, N175, N228, N238, N265, N282, N285, N291, and N324 each carry an N-linked (GlcNAc...) asparagine glycan. The chain crosses the membrane as a helical span at residues 342 to 358 (GLSSVGGILFSHVYFTT). Over 359–548 (RSTDVCSLIF…LMVIHPLDDT (190 aa)) the chain is Cytoplasmic.

As to quaternary structure, forms an oligomer with a molecular mass of 200 kDa by disulfide bonds. Interacts with CCH1 to form a Ca(2+) influx channel. N-glycosylated.

It localises to the cell membrane. Functionally, calcium-permeable, cation-selective stretch-activated channel (SAC) that functions together with CCH1 to mediate calcium entry into cells. Required during mating. Together with CCH1, essential for tolerance to iron stress, which leads to an increased oxidative poise, and to cold stress. This is Stretch-activated cation channel MID1 (MID1) from Saccharomyces cerevisiae (strain ATCC 204508 / S288c) (Baker's yeast).